We begin with the raw amino-acid sequence, 178 residues long: Large ribosomal subunit protein bL25 (178 aa).

This sequence belongs to the bacterial ribosomal protein bL25 family. CTC subfamily. Part of the 50S ribosomal subunit; part of the 5S rRNA/L5/L18/L25 subcomplex. Contacts the 5S rRNA. Binds to the 5S rRNA independently of L5 and L18.

This is one of the proteins that binds to the 5S RNA in the ribosome where it forms part of the central protuberance. The chain is Large ribosomal subunit protein bL25 from Helicobacter acinonychis (strain Sheeba).